Consider the following 477-residue polypeptide: Bifunctional protein HldE (477 aa).

Positions 1-318 are ribokinase; that stretch reads MQIQLPMFQN…RRAVQQEQGA (318 aa). 195-198 is a binding site for ATP; that stretch reads NLSE. The active site involves aspartate 264. Residues 344-477 form a cytidylyltransferase region; that stretch reads FTNGCFDIIH…VEKIRKDQVK (134 aa).

The protein in the N-terminal section; belongs to the carbohydrate kinase PfkB family. This sequence in the C-terminal section; belongs to the cytidylyltransferase family. In terms of assembly, homodimer.

It catalyses the reaction D-glycero-beta-D-manno-heptose 7-phosphate + ATP = D-glycero-beta-D-manno-heptose 1,7-bisphosphate + ADP + H(+). The enzyme catalyses D-glycero-beta-D-manno-heptose 1-phosphate + ATP + H(+) = ADP-D-glycero-beta-D-manno-heptose + diphosphate. Its pathway is nucleotide-sugar biosynthesis; ADP-L-glycero-beta-D-manno-heptose biosynthesis; ADP-L-glycero-beta-D-manno-heptose from D-glycero-beta-D-manno-heptose 7-phosphate: step 1/4. It participates in nucleotide-sugar biosynthesis; ADP-L-glycero-beta-D-manno-heptose biosynthesis; ADP-L-glycero-beta-D-manno-heptose from D-glycero-beta-D-manno-heptose 7-phosphate: step 3/4. In terms of biological role, catalyzes the phosphorylation of D-glycero-D-manno-heptose 7-phosphate at the C-1 position to selectively form D-glycero-beta-D-manno-heptose-1,7-bisphosphate. Its function is as follows. Catalyzes the ADP transfer from ATP to D-glycero-beta-D-manno-heptose 1-phosphate, yielding ADP-D-glycero-beta-D-manno-heptose. This chain is Bifunctional protein HldE, found in Hahella chejuensis (strain KCTC 2396).